We begin with the raw amino-acid sequence, 853 residues long: MDNKKLNTLIESIDQWVIESNDEKISELYRQSSKADNEFEDIPILKDCITLAFNILLGDSLVGSFKTDLMKKLFLLDSLNNYKDNINEYFEKVNNNITSLNETPLNQLSVLLSGITFLNLYVQINWTGPTVQISPDFTLKNDNKSILELLEVDGETVYKKVKNPIFLYLSKICLVDNYSMLDSCKSSCWWSCRSVMYHQRSLKNATPTFKSLLNERFQIVTRFYSISTLLEDSEEFMDTSSSTTSESKKSIKEINGLKDLASRAIIEQSLVFNYFRQLNKIKESMERACEVSELDCALTGALGKRTRFQTFDTAQLVMEVKNCRQRDDSGDGDNNNEFNRNSSIKREVTNDDPTLLVRPSLIEEVKGQNILLRNVDQMLILLQCLNVKNQNSNNGLTTEEMLPYIQKTLEKSNNWIIHSMGLLIKSRLEIVSSKTAERAVLQIQALVDQYDDPTSSATERINAIYSTDYPARWDLEKEVAERFIGIGAAASAFEIFERLEMWDEAIKCLTFMGKNSRSEELVLQRLEIEPSPELYCVLGDLKSDEQFYIKGWELSKKRYSRAQRSLARFYLEREQYQLCIDAFQIALAINPLFPNSWFSLGCAAMKIEKWDTALNAFSRVVSLEPEEGEGWANLASIYMYQNKMDKASSALMEGLKHKRENWKMWENFLFCCIAIKDYQNAVIAINHIFDLNDKKVNLKLLSIIADHVVSKDQLDKQGISGSKMEKTVSELFGRLTSKLTNNPDLWRLYSSYHHRLGNVDKAIDLQQKACRSCESAHWEGEQSTFEKVLQFNTTLCDLYFQYPNTSNIYSAKLKVKSILKKCESSWKETEHYKNFEQLLIKLNNYESELLQKK.

Residues 324-345 (RQRDDSGDGDNNNEFNRNSSIK) form a disordered region. Residues 332-342 (GDNNNEFNRNS) are compositionally biased toward polar residues. TPR repeat units follow at residues 486–519 (IGAA…SRSE), 525–558 (RLEI…SKKR), 560–593 (SRAQ…NPLF), 594–627 (PNSW…EPEE), 629–661 (EGWA…KREN), and 662–695 (WKMW…NDKK).

It belongs to the TTC27 family.

This Dictyostelium discoideum (Social amoeba) protein is Tetratricopeptide repeat protein 27 homolog (ttc27).